Reading from the N-terminus, the 255-residue chain is CD320 antigen (255 aa).

Positions methionine 1–cysteine 29 are cleaved as a signal peptide. The Extracellular segment spans residues leucine 30–tyrosine 203. LDL-receptor class A domains are found at residues serine 52–glycine 89 and serine 120–glycine 157. 6 disulfides stabilise this stretch: cysteine 53–cysteine 66, cysteine 60–cysteine 79, cysteine 73–cysteine 88, cysteine 121–cysteine 134, cysteine 128–cysteine 147, and cysteine 141–cysteine 156. Residues tryptophan 71, aspartate 74, aspartate 76, aspartate 78, aspartate 84, and glutamate 85 each coordinate Ca(2+). Residues tryptophan 139, aspartate 142, histidine 144, aspartate 146, aspartate 152, and glutamate 153 each contribute to the Ca(2+) site. 2 N-linked (GlcNAc...) asparagine glycosylation sites follow: asparagine 177 and asparagine 183. A helical transmembrane segment spans residues glycine 204–leucine 224. Over serine 225 to leucine 255 the chain is Cytoplasmic.

In terms of assembly, interacts (via LDL-receptor class A domains) with TCN2.

The protein localises to the cell membrane. Its function is as follows. Receptor for transcobalamin saturated with cobalamin (TCbl). Plays an important role in cobalamin uptake. Plasma membrane protein that is expressed on follicular dendritic cells (FDC) and mediates interaction with germinal center B cells. Functions as a costimulator to promote B cell responses to antigenic stimuli; promotes B cell differentiation and proliferation. Germinal center-B (GC-B) cells differentiate into memory B-cells and plasma cells (PC) through interaction with T-cells and follicular dendritic cells (FDC). CD320 augments the proliferation of PC precursors generated by IL-10. The sequence is that of CD320 antigen (CD320) from Bos taurus (Bovine).